We begin with the raw amino-acid sequence, 335 residues long: Galactinol synthase 2 (335 aa).

K103 is an active-site residue. D119, D121, and H257 together coordinate Mn(2+).

Belongs to the glycosyltransferase 8 family. Galactosyltransferase subfamily. Requires a divalent metal cation as cofactor. In terms of tissue distribution, accumulates in mature seeds.

It localises to the cytoplasm. The enzyme catalyses myo-inositol + UDP-alpha-D-galactose = alpha-D-galactosyl-(1-&gt;3)-1D-myo-inositol + UDP + H(+). Its function is as follows. Galactinol synthase involved in the biosynthesis of raffinose family oligosaccharides (RFOs) that function as osmoprotectants. Promotes stress tolerance of factors such as drought, chilling, salinity and methylviologen (MV), a superoxide radical generating drug, by mediating an increase in levels of the endogenous osmoprotective compounds, galactinol and raffinose. The chain is Galactinol synthase 2 (GOLS2) from Arabidopsis thaliana (Mouse-ear cress).